We begin with the raw amino-acid sequence, 207 residues long: MTIGIHEEQQLWRNGARIVAGVDEVGRGCWAGPVVAAAVSFPTHLLNDPVALAGINDSKTLSAEARQAMAQQIRHLASGIGLGVVSAHLIDLFGIAEATKWAMMHAVLSLPSLPDGLVIDWVKLPELPLLQRSLPKGDAISISVAAASIIAKVYRDNLMHEYDQRDPRYGWAAHKGYGTAQHQRALAAHGPSGLHRRSFKPLAAFVD.

In terms of domain architecture, RNase H type-2 spans 17–207 (RIVAGVDEVG…SFKPLAAFVD (191 aa)). Positions 23, 24, and 120 each coordinate a divalent metal cation.

Belongs to the RNase HII family. Mn(2+) serves as cofactor. Mg(2+) is required as a cofactor.

It is found in the cytoplasm. It carries out the reaction Endonucleolytic cleavage to 5'-phosphomonoester.. Endonuclease that specifically degrades the RNA of RNA-DNA hybrids. The polypeptide is Ribonuclease HII (Herpetosiphon aurantiacus (strain ATCC 23779 / DSM 785 / 114-95)).